Here is a 539-residue protein sequence, read N- to C-terminus: GMP synthase [glutamine-hydrolyzing] (539 aa).

In terms of domain architecture, Glutamine amidotransferase type-1 spans lysine 4–aspartate 202. The Nucleophile role is filled by cysteine 81. Residues histidine 176 and glutamate 178 contribute to the active site. The GMPS ATP-PPase domain occupies tryptophan 203 to arginine 395. Residue serine 230–serine 236 coordinates ATP.

In terms of assembly, homodimer.

The enzyme catalyses XMP + L-glutamine + ATP + H2O = GMP + L-glutamate + AMP + diphosphate + 2 H(+). It functions in the pathway purine metabolism; GMP biosynthesis; GMP from XMP (L-Gln route): step 1/1. In terms of biological role, catalyzes the synthesis of GMP from XMP. In Burkholderia pseudomallei (strain 1106a), this protein is GMP synthase [glutamine-hydrolyzing].